Consider the following 226-residue polypeptide: MKKAVVLLSGGLDSTTVLYLAKSQGYEVYAMSFDYGQRHKKEIQCARDVASGTGAADFVLVTTNMNAWGGSALTDNSIKVPEFNEESEKIPVTYVPARNMIFLSYAASYAETIGAYDIFIGVSEVDYSGYVDCRHEFIDSMEKTINLGTVCAVEHKKYIKIHAPFLYKTKSEEIKIGMDLGVKYEKTWTCYNGEEFACGICDSCRLRLEAFKEAGYKDPIKYKGEK.

Residue 8–18 (LSGGLDSTTVL) participates in ATP binding. C190, C198, C201, and C204 together coordinate Zn(2+).

Belongs to the QueC family. Homodimer. Requires Zn(2+) as cofactor.

It catalyses the reaction 7-carboxy-7-deazaguanine + NH4(+) + ATP = 7-cyano-7-deazaguanine + ADP + phosphate + H2O + H(+). It participates in purine metabolism; 7-cyano-7-deazaguanine biosynthesis. Functionally, catalyzes the ATP-dependent conversion of 7-carboxy-7-deazaguanine (CDG) to 7-cyano-7-deazaguanine (preQ(0)). This Clostridium kluyveri (strain ATCC 8527 / DSM 555 / NBRC 12016 / NCIMB 10680 / K1) protein is 7-cyano-7-deazaguanine synthase.